The chain runs to 623 residues: MSETNTQKAAEKHEFSAEVGRLLDLVVHALYSDREIFLRELVANAADATDKRRFEALTDSALALPENASIRINPDKSQKELTISDDGVGMTHDELAQNLGTIARSGTRAFGEKLNAAKPEDRPSLIGQFGVGFYAAFMVADRVDVTSRKAGSDEAWTWSSDGKGAFTLTPASRSTPGTDIVLHMKDDADEFLDSWRLRSIIRKWADHISWPITLRETKEDGTTEDQAANEGTALWSKPKSEITPEQYAEFYRHISHAFDEPYATLHWRAEGVTEFTALLFLPSARPFDFMEQSRESRIHLHVRRMFITDEAELVPNWMRFVQGVVDTEDLPLNVSREMLQATPVLARIRKAVTKRVLSEISKRAKEADSGFNSFWENFGAVIKEGLWEDAEHRTEIAGFARFHSTYSDDLITLDDYISRMKDGQDAIYYLTGDSLDALKSSAQLEGFRARGLEVLLLSDPVDGFWPERLSSYQEKPLRSVTHSHGDLEKFESVEADTTEAADVEKLVPALKDALGDQVKDVRSTVRLTGSAVVITSDGGPDLTMQRLMRRSGQAMPAMPPILEINPKHPLIKALAERVAKGESVKDYATVLLDLARVQEGEPLPDPTGFGRSLATLLAGPAAE.

The a; substrate-binding stretch occupies residues methionine 1–arginine 336. The tract at residues glutamate 337–arginine 546 is b. The c stretch occupies residues leucine 547–glutamate 623.

This sequence belongs to the heat shock protein 90 family. In terms of assembly, homodimer.

The protein resides in the cytoplasm. In terms of biological role, molecular chaperone. Has ATPase activity. In Gluconobacter oxydans (strain 621H) (Gluconobacter suboxydans), this protein is Chaperone protein HtpG.